The chain runs to 302 residues: ATP synthase gamma chain (302 aa).

Belongs to the ATPase gamma chain family. As to quaternary structure, F-type ATPases have 2 components, CF(1) - the catalytic core - and CF(0) - the membrane proton channel. CF(1) has five subunits: alpha(3), beta(3), gamma(1), delta(1), epsilon(1). CF(0) has three main subunits: a, b and c.

The protein resides in the cell membrane. In terms of biological role, produces ATP from ADP in the presence of a proton gradient across the membrane. The gamma chain is believed to be important in regulating ATPase activity and the flow of protons through the CF(0) complex. In Enterococcus faecalis (strain ATCC 700802 / V583), this protein is ATP synthase gamma chain.